The sequence spans 151 residues: Aspartate carbamoyltransferase regulatory chain (151 aa).

The Zn(2+) site is built by Cys-108, Cys-113, Cys-138, and Cys-141.

The protein belongs to the PyrI family. Contains catalytic and regulatory chains. Zn(2+) is required as a cofactor.

In terms of biological role, involved in allosteric regulation of aspartate carbamoyltransferase. In Pyrobaculum islandicum (strain DSM 4184 / JCM 9189 / GEO3), this protein is Aspartate carbamoyltransferase regulatory chain.